Here is a 169-residue protein sequence, read N- to C-terminus: Large ribosomal subunit protein bL19m (169 aa).

The transit peptide at 1–16 directs the protein to the mitochondrion; the sequence is MWSRNVRLLGSWTRSY.

The protein belongs to the bacterial ribosomal protein bL19 family. In terms of assembly, component of the mitochondrial large ribosomal subunit (mt-LSU). Mature yeast 74S mitochondrial ribosomes consist of a small (37S) and a large (54S) subunit. The 37S small subunit contains a 15S ribosomal RNA (15S mt-rRNA) and 34 different proteins. The 54S large subunit contains a 21S rRNA (21S mt-rRNA) and 46 different proteins.

Its subcellular location is the mitochondrion. Its function is as follows. Component of the mitochondrial ribosome (mitoribosome), a dedicated translation machinery responsible for the synthesis of mitochondrial genome-encoded proteins, including at least some of the essential transmembrane subunits of the mitochondrial respiratory chain. The mitoribosomes are attached to the mitochondrial inner membrane and translation products are cotranslationally integrated into the membrane. bL19m is essential for respiration. This chain is Large ribosomal subunit protein bL19m (IMG1), found in Saccharomyces cerevisiae (strain ATCC 204508 / S288c) (Baker's yeast).